Reading from the N-terminus, the 492-residue chain is Probable glycine dehydrogenase (decarboxylating) subunit 2 (492 aa).

Lys274 carries the post-translational modification N6-(pyridoxal phosphate)lysine.

This sequence belongs to the GcvP family. C-terminal subunit subfamily. The glycine cleavage system is composed of four proteins: P, T, L and H. In this organism, the P 'protein' is a heterodimer of two subunits. Pyridoxal 5'-phosphate serves as cofactor.

The enzyme catalyses N(6)-[(R)-lipoyl]-L-lysyl-[glycine-cleavage complex H protein] + glycine + H(+) = N(6)-[(R)-S(8)-aminomethyldihydrolipoyl]-L-lysyl-[glycine-cleavage complex H protein] + CO2. Its function is as follows. The glycine cleavage system catalyzes the degradation of glycine. The P protein binds the alpha-amino group of glycine through its pyridoxal phosphate cofactor; CO(2) is released and the remaining methylamine moiety is then transferred to the lipoamide cofactor of the H protein. This is Probable glycine dehydrogenase (decarboxylating) subunit 2 from Staphylococcus saprophyticus subsp. saprophyticus (strain ATCC 15305 / DSM 20229 / NCIMB 8711 / NCTC 7292 / S-41).